Reading from the N-terminus, the 558-residue chain is Putative cation/proton antiporter YbaL (558 aa).

The Periplasmic segment spans residues 1–3 (MHH). The chain crosses the membrane as a helical span at residues 4–24 (ATPLITTIVGGLVLAFILGML). The Cytoplasmic portion of the chain corresponds to 25–31 (ANKLRIS). The chain crosses the membrane as a helical span at residues 32–52 (PLVGYLLAGVLAGPFTPGFVA). Residues 53-55 (DTK) lie on the Periplasmic side of the membrane. Residues 56–76 (LAPELAELGVILLMFGVGLHF) form a helical membrane-spanning segment. The Cytoplasmic portion of the chain corresponds to 77-85 (SLKDLMAVK). Residues 86–106 (AIAIPGAIAQIAVATLLGMAL) traverse the membrane as a helical segment. Residues 107 to 112 (SAVLGW) are Periplasmic-facing. A helical transmembrane segment spans residues 113 to 133 (SLMTGIVFGLCLSTASTVVLL). At 134 to 148 (RALEERQLIDSQRGQ) the chain is on the cytoplasmic side. Residues 149–169 (IAIGWLIVEDLVMVLTLVLLP) form a helical membrane-spanning segment. Topologically, residues 170–185 (AVAGMMEQGDVGFATL) are periplasmic. Residues 186–206 (AVDMGITIGKVIAFIAIMMLV) traverse the membrane as a helical segment. The Cytoplasmic segment spans residues 207–225 (GRRLVPWIMARSAATGSRE). Residues 226–246 (LFTLSVLALALGVAFGAVELF) traverse the membrane as a helical segment. A topological domain (periplasmic) is located at residue D247. The chain crosses the membrane as a helical span at residues 248–268 (VSFALGAFFAGMVLNESELSH). The Cytoplasmic segment spans residues 269 to 279 (RAAHDTLPLRD). The helical transmembrane segment at 280-300 (AFAVLFFVSVGMLFDPLILIQ) threads the bilayer. Residues 301 to 303 (QPL) are Periplasmic-facing. The chain crosses the membrane as a helical span at residues 304–324 (AVLATLAIILFGKSLAAFFLV). Residues 325–336 (RLFGHSQRTALT) are Cytoplasmic-facing. A helical transmembrane segment spans residues 337–357 (IAASLAQIGEFAFILAGLGMA). Over 358-367 (LNLLPQAGQN) the chain is Periplasmic. The chain crosses the membrane as a helical span at residues 368 to 388 (LVLAGAILSIMLNPVLFALLE). The Cytoplasmic segment spans residues 389-558 (KYLAKTETLE…TPPAGEVVTG (170 aa)). Residues 417 to 534 (CNHALLVGYG…TERGANQVVM (118 aa)) enclose the RCK N-terminal domain. Residues 427–428 (RV), 447–448 (ET), 467–468 (NA), E494, and R514 contribute to the AMP site.

This sequence belongs to the monovalent cation:proton antiporter 2 (CPA2) transporter (TC 2.A.37) family.

Its subcellular location is the cell inner membrane. This chain is Putative cation/proton antiporter YbaL (ybaL), found in Escherichia coli (strain K12).